We begin with the raw amino-acid sequence, 339 residues long: Serine racemase (339 aa).

Position 13 (Glu-13) interacts with Mg(2+). ATP contacts are provided by Ser-31, Ser-32, Ile-33, Lys-51, and Thr-52. The Proton acceptor role is filled by Lys-56. Lys-56 carries the N6-(pyridoxal phosphate)lysine modification. Residue Pro-69 participates in Ca(2+) binding. A Phosphothreonine modification is found at Thr-71. Position 81 (Thr-81) interacts with Ca(2+). Ser-84 serves as the catalytic Proton acceptor. Asn-86 contacts pyridoxal 5'-phosphate. Gln-89 contributes to the ATP binding site. The residue at position 113 (Cys-113) is an S-nitrosocysteine. An ATP-binding site is contributed by Tyr-121. Asn-154 is a pyridoxal 5'-phosphate binding site. Asp-178 provides a ligand contact to Mg(2+). Gly-185, Gly-186, Gly-187, Gly-188, and Met-189 together coordinate pyridoxal 5'-phosphate. The Mg(2+) site is built by Glu-210, Ala-214, Asp-216, and Asn-247. The Ca(2+) site is built by Glu-210, Ala-214, Asp-216, and Asn-247. Glu-210, Ala-214, and Asp-216 together coordinate Mn(2+). Lys-279 lines the ATP pocket. Ser-313 lines the pyridoxal 5'-phosphate pocket. Residue Asn-316 participates in ATP binding.

The protein belongs to the serine/threonine dehydratase family. In terms of assembly, homodimer. Mg(2+) is required as a cofactor. It depends on Mn(2+) as a cofactor. Requires Ca(2+) as cofactor. The cofactor is pyridoxal 5'-phosphate. In terms of processing, S-nitrosylated, leading to decrease the enzyme activity. As to expression, expressed in the hippocampus (at protein level). Expressed in the small intestine.

It catalyses the reaction L-serine = D-serine. It carries out the reaction D-serine = pyruvate + NH4(+). The enzyme catalyses L-serine = pyruvate + NH4(+). Its activity is regulated as follows. Allosterically activated by magnesium, and possibly also other divalent metal cations. Allosterically activated by ATP, ADP or GTP. Catalyzes the synthesis of D-serine from L-serine. D-serine is a key coagonist with glutamate at NMDA receptors. Has dehydratase activity towards both L-serine and D-serine. In Mus musculus (Mouse), this protein is Serine racemase (Srr).